A 265-amino-acid polypeptide reads, in one-letter code: MSKTTIIERIWPAKEIIEDLSELRKQSPLTHVITNIVVTNWTANVLLAIGSSPAMVIAKEEAGEFAKIASGLLINIGTVTSNDAITMKIAAEAAHQAKIPWVLDPVAVGALGFRTELAKELLNFKPTVIRGNASEILALAGTDGGGKGVDSTALSSDALPLAQMLAEKTGAVIAISGEIDYVTNGKETISISGGDPIMTKVTGVGCSLGGVIASFLGVQKDPLRATATASAVFAIAGTRSAKISKGSGSFAVNFLDQLNLLSTEK.

Methionine 55 is a binding site for substrate. Residues arginine 130 and serine 176 each contribute to the ATP site. Position 203 (glycine 203) interacts with substrate.

This sequence belongs to the Thz kinase family. The cofactor is Mg(2+).

The catalysed reaction is 5-(2-hydroxyethyl)-4-methylthiazole + ATP = 4-methyl-5-(2-phosphooxyethyl)-thiazole + ADP + H(+). It participates in cofactor biosynthesis; thiamine diphosphate biosynthesis; 4-methyl-5-(2-phosphoethyl)-thiazole from 5-(2-hydroxyethyl)-4-methylthiazole: step 1/1. Functionally, catalyzes the phosphorylation of the hydroxyl group of 4-methyl-5-beta-hydroxyethylthiazole (THZ). This is Hydroxyethylthiazole kinase from Leptospira interrogans serogroup Icterohaemorrhagiae serovar copenhageni (strain Fiocruz L1-130).